The primary structure comprises 432 residues: Alpha-2 adrenergic receptor (432 aa).

Topologically, residues 1–32 are extracellular; sequence MDPLNATGMDAFTAIHLNASWSADSGYSLAAI. N-linked (GlcNAc...) asparagine glycans are attached at residues asparagine 5 and asparagine 18. A helical transmembrane segment spans residues 33–57; that stretch reads ASIAALVSFLILFTVVGNILVVIAV. The Cytoplasmic portion of the chain corresponds to 58–69; it reads LTSRALKAPQNL. The chain crosses the membrane as a helical span at residues 70–95; that stretch reads FLVSLATADILVATLVMPFSLANELM. Over 96 to 105 the chain is Extracellular; that stretch reads GYWYFGKVWC. Residues cysteine 105 and cysteine 183 are joined by a disulfide bond. A helical membrane pass occupies residues 106–128; sequence GIYLALDVLFCTSSIVHLCAISL. The Cytoplasmic segment spans residues 129–149; the sequence is DRYWSVTQAVEYNLKRTPKRV. The chain crosses the membrane as a helical span at residues 150–172; the sequence is KCIIVIVWLISAFISSPPLLSID. Residues 173-188 are Extracellular-facing; the sequence is SNNYISSQPQCMLNDD. Residues 189–212 traverse the membrane as a helical segment; the sequence is TWYILSSSMASFFAPCLIMILVYI. Over 213–356 the chain is Cytoplasmic; that stretch reads RIYQVAKTRT…QAREKRFTFV (144 aa). Residues 222-319 form a disordered region; that stretch reads TRSMSGKEPR…SISKQSARIS (98 aa). Polar residues-rich tracts occupy residues 235–246 and 265–275; these read VTQTENGLNKAN and SQRTVTIGQQT. Residues 288 to 300 are compositionally biased toward basic and acidic residues; sequence GKGHKPQRQDSQR. The segment covering 309 to 319 has biased composition (polar residues); that stretch reads SSISKQSARIS. Residues 357–380 traverse the membrane as a helical segment; sequence LAVVMGVFVVCWFPFFFSYSLHAV. The Extracellular segment spans residues 381-393; it reads CRDYCKIPDTLFK. Residues 394-413 form a helical membrane-spanning segment; sequence FFWIGYCNSSLNPAIYTIFN. Residues 414-432 lie on the Cytoplasmic side of the membrane; sequence RDFRRAFQKILCKSWKKSF.

The protein belongs to the G-protein coupled receptor 1 family.

It is found in the cell membrane. Its function is as follows. Alpha-2 adrenergic receptors mediate the catecholamine-induced inhibition of adenylate cyclase through the action of G proteins. This chain is Alpha-2 adrenergic receptor, found in Labrus ossifagus (Cuckoo wrasse).